The sequence spans 211 residues: Large ribosomal subunit protein eL13 (211 aa).

The residue at position 16 (K16) is an N6-acetyllysine. Residues S52 and S77 each carry the phosphoserine modification. Glycyl lysine isopeptide (Lys-Gly) (interchain with G-Cter in SUMO2) cross-links involve residues K123 and K145. A Glycyl lysine isopeptide (Lys-Gly) (interchain with G-Cter in SUMO1); alternate cross-link involves residue K174. Glycyl lysine isopeptide (Lys-Gly) (interchain with G-Cter in SUMO2); alternate cross-links involve residues K174 and K177. An N6-acetyllysine; alternate modification is found at K177.

It belongs to the eukaryotic ribosomal protein eL13 family. Component of the 60S large ribosomal subunit (LSU).

It is found in the cytoplasm. Functionally, component of the ribosome, a large ribonucleoprotein complex responsible for the synthesis of proteins in the cell. The small ribosomal subunit (SSU) binds messenger RNAs (mRNAs) and translates the encoded message by selecting cognate aminoacyl-transfer RNA (tRNA) molecules. The large subunit (LSU) contains the ribosomal catalytic site termed the peptidyl transferase center (PTC), which catalyzes the formation of peptide bonds, thereby polymerizing the amino acids delivered by tRNAs into a polypeptide chain. The nascent polypeptides leave the ribosome through a tunnel in the LSU and interact with protein factors that function in enzymatic processing, targeting, and the membrane insertion of nascent chains at the exit of the ribosomal tunnel. As part of the LSU, it is probably required for its formation and the maturation of rRNAs. Plays a role in bone development. The protein is Large ribosomal subunit protein eL13 (RPL13) of Bos taurus (Bovine).